The chain runs to 429 residues: Histidine--tRNA ligase (429 aa).

Belongs to the class-II aminoacyl-tRNA synthetase family. In terms of assembly, homodimer.

Its subcellular location is the cytoplasm. The enzyme catalyses tRNA(His) + L-histidine + ATP = L-histidyl-tRNA(His) + AMP + diphosphate + H(+). The polypeptide is Histidine--tRNA ligase (Pseudomonas paraeruginosa (strain DSM 24068 / PA7) (Pseudomonas aeruginosa (strain PA7))).